The following is a 257-amino-acid chain: Coenzyme F420:L-glutamate ligase (257 aa).

Residues 9 to 12, 38 to 39, and K43 each bind GTP; these read VPEV and ST. D113 contacts a divalent metal cation. N116 provides a ligand contact to GTP. A divalent metal cation is bound by residues D154, T155, and E212. 210-217 contacts GTP; the sequence is TGEGDGGT.

Belongs to the CofE family. As to quaternary structure, homodimer. The cofactor is Mg(2+). Mn(2+) serves as cofactor. K(+) is required as a cofactor.

The catalysed reaction is oxidized coenzyme F420-0 + GTP + L-glutamate = oxidized coenzyme F420-1 + GDP + phosphate + H(+). It catalyses the reaction oxidized coenzyme F420-1 + GTP + L-glutamate = oxidized coenzyme F420-2 + GDP + phosphate + H(+). It functions in the pathway cofactor biosynthesis; coenzyme F420 biosynthesis. Catalyzes the GTP-dependent successive addition of two or more gamma-linked L-glutamates to the L-lactyl phosphodiester of 7,8-didemethyl-8-hydroxy-5-deazariboflavin (F420-0) to form coenzyme F420-0-glutamyl-glutamate (F420-2) or polyglutamated F420 derivatives. The polypeptide is Coenzyme F420:L-glutamate ligase (Haloarcula marismortui (strain ATCC 43049 / DSM 3752 / JCM 8966 / VKM B-1809) (Halobacterium marismortui)).